We begin with the raw amino-acid sequence, 1128 residues long: Lysylphosphatidylglycerol biosynthesis bifunctional protein LysX (1128 aa).

Residues 1 to 47 form a disordered region; the sequence is MDNPPPTGVAPRHLPPGSVHTGKVTASLSHRRPDSVQDAPPAPVPHR. Residues 1–632 form a phosphatidylglycerol lysyltransferase region; the sequence is MDNPPPTGVA…GLHADGSPPD (632 aa). The next 6 helical transmembrane spans lie at 55–75, 97–117, 121–141, 147–167, 184–204, and 240–260; these read VPHIAGLVLGVFAVACLLWSL, APDTNVMWALIVGLLAGAIAS, IAWWLLVGYLTLFAVANGLRF, INALVAMIVQVGVVGLLIAAW, GVLVGGLAIGCLLGWGLVEVF, and FVNVLLGLFGAIALLAAVLTL. Residues 619–644 are disordered; that stretch reads DTLTGLHADGSPPDWPKPDLLDSGPR. Residues 633-1128 are lysine--tRNA ligase; the sequence is WPKPDLLDSG…TLPFPLVKPR (496 aa). The segment covering 634-644 has biased composition (basic and acidic residues); the sequence is PKPDLLDSGPR. Mg(2+) contacts are provided by aspartate 1040 and glutamate 1047.

In the N-terminal section; belongs to the LPG synthetase family. The protein in the C-terminal section; belongs to the class-II aminoacyl-tRNA synthetase family. Mg(2+) is required as a cofactor.

It localises to the cell membrane. It carries out the reaction tRNA(Lys) + L-lysine + ATP = L-lysyl-tRNA(Lys) + AMP + diphosphate. The enzyme catalyses L-lysyl-tRNA(Lys) + a 1,2-diacyl-sn-glycero-3-phospho-(1'-sn-glycerol) = a 1,2-diacyl-sn-glycero-3-phospho-1'-(3'-O-L-lysyl)-sn-glycerol + tRNA(Lys). Functionally, catalyzes the production of L-lysyl-tRNA(Lys)transfer and the transfer of a lysyl group from L-lysyl-tRNA(Lys) to membrane-bound phosphatidylglycerol (PG), which produces lysylphosphatidylglycerol (LPG), one of the components of the bacterial membrane with a positive net charge. LPG synthesis contributes to the resistance to cationic antimicrobial peptides (CAMPs) and likely protects M.tuberculosis against the CAMPs produced by competiting microorganisms (bacteriocins). In fact, the modification of anionic phosphatidylglycerol with positively charged L-lysine results in repulsion of the peptides. The sequence is that of Lysylphosphatidylglycerol biosynthesis bifunctional protein LysX (lysX) from Nocardia farcinica (strain IFM 10152).